Consider the following 513-residue polypeptide: MTHVINLDGEHLTLEDVIAVARHGATCEIDQEAKKAVEASRKIVDDIVREKRVVYGVTTGFGSLCNVSISPEDTTQLQENLIRTHSSGYGDPLPEDAVRAIMLIRINSLVKGYSGIRLSTVEKLLELLNKGVVPYIPEKGSLGASGDLAPLAHMVLPMLGLGRAYYQGQLLSGQEALDKAGIEKIALAAKEGLALINGTTVLTGIGALATYDAIQLLKLSDVAGALSMEVHNGITSPFEEDLHTIRPQSGQLATARNIRNLLEGSGNTTVATQQRVQDPYTLRCIPQIHGASKDSIAYVKTKVEIEINSVTDNPIITKEGHVISGGNFHGEPMAQPFDFLGIAISEIGNVSERRVERLVNSQLSKLPSFLVKHPGLNSGFMITQYACASLASENKVLSHPASVDSIPSCENQEDFVSMGTTAARKAAEILKNSRRIVATEIMAACQALDLKPENHELGKGTKPAYDLFRQHVRFIEFDKDIEIYEELNKASELIENEEFLAAVEKAVDLSIQF.

A cross-link (5-imidazolinone (Ala-Gly)) is located at residues 144–146 (ASG). At Ser-145 the chain carries 2,3-didehydroalanine (Ser).

The protein belongs to the PAL/histidase family. In terms of processing, contains an active site 4-methylidene-imidazol-5-one (MIO), which is formed autocatalytically by cyclization and dehydration of residues Ala-Ser-Gly.

The protein resides in the cytoplasm. The catalysed reaction is L-histidine = trans-urocanate + NH4(+). It participates in amino-acid degradation; L-histidine degradation into L-glutamate; N-formimidoyl-L-glutamate from L-histidine: step 1/3. This is Histidine ammonia-lyase from Streptococcus sanguinis (strain SK36).